Here is a 208-residue protein sequence, read N- to C-terminus: LexA repressor (208 aa).

Residues 30–50 (VREICAAVGLSSTSTVHGHLS) constitute a DNA-binding region (H-T-H motif). Residues serine 129 and lysine 167 each act as for autocatalytic cleavage activity in the active site.

Belongs to the peptidase S24 family. Homodimer.

It catalyses the reaction Hydrolysis of Ala-|-Gly bond in repressor LexA.. Its function is as follows. Represses a number of genes involved in the response to DNA damage (SOS response), including recA and lexA. In the presence of single-stranded DNA, RecA interacts with LexA causing an autocatalytic cleavage which disrupts the DNA-binding part of LexA, leading to derepression of the SOS regulon and eventually DNA repair. In Lactobacillus acidophilus (strain ATCC 700396 / NCK56 / N2 / NCFM), this protein is LexA repressor.